Reading from the N-terminus, the 199-residue chain is Recombination protein RecR (199 aa).

The C4-type zinc finger occupies 56–71 (CRSCFNVAQSELCRIC). Residues 79–174 (ALICVVEEPK…RVTRLASGLP (96 aa)) form the Toprim domain.

This sequence belongs to the RecR family.

In terms of biological role, may play a role in DNA repair. It seems to be involved in an RecBC-independent recombinational process of DNA repair. It may act with RecF and RecO. This is Recombination protein RecR from Frankia alni (strain DSM 45986 / CECT 9034 / ACN14a).